Reading from the N-terminus, the 301-residue chain is Ornithine carbamoyltransferase (301 aa).

Residues 47–50 (STRT), glutamine 74, arginine 98, and 125–128 (HPMQ) each bind carbamoyl phosphate. L-ornithine-binding positions include asparagine 156, aspartate 220, and 224–225 (SM). Carbamoyl phosphate contacts are provided by residues 260–261 (CL) and arginine 288.

This sequence belongs to the aspartate/ornithine carbamoyltransferase superfamily. OTCase family.

It localises to the cytoplasm. The catalysed reaction is carbamoyl phosphate + L-ornithine = L-citrulline + phosphate + H(+). It participates in amino-acid biosynthesis; L-arginine biosynthesis; L-arginine from L-ornithine and carbamoyl phosphate: step 1/3. Its function is as follows. Reversibly catalyzes the transfer of the carbamoyl group from carbamoyl phosphate (CP) to the N(epsilon) atom of ornithine (ORN) to produce L-citrulline. The protein is Ornithine carbamoyltransferase of Picrophilus torridus (strain ATCC 700027 / DSM 9790 / JCM 10055 / NBRC 100828 / KAW 2/3).